We begin with the raw amino-acid sequence, 84 residues long: uncharacterized protein (84 aa).

The tract at residues 1–21 (MYYRRQGEPQEMYGNGNNSVS) is disordered. A helical membrane pass occupies residues 49-69 (YIIYAIVAAILLLLFWLLYKK).

It localises to the membrane. This is an uncharacterized protein from Invertebrate iridescent virus 6 (IIV-6).